Consider the following 300-residue polypeptide: Junctional adhesion molecule A (300 aa).

The signal sequence occupies residues 1 to 26 (MGTEGKAGSKLLFLFTSMILGSLVQG). Residues 27 to 238 (KGSVYSPQTA…MEAVELNVGG (212 aa)) lie on the Extracellular side of the membrane. Ig-like V-type domains are found at residues 28 to 122 (GSVY…GEVS) and 134 to 228 (PTVS…EAVR). 2 disulfide bridges follow: Cys49–Cys108 and Cys152–Cys212. Asn185 is a glycosylation site (N-linked (GlcNAc...) asparagine). A helical membrane pass occupies residues 239–259 (IVAAVLVTLILLGLLIFGIWF). Residues 260–300 (AYSRGYFERTKKGTAPGKKVIYSQPSARSEGEFKQTSSFLV) are Cytoplasmic-facing. 3 positions are modified to phosphoserine: Ser282, Ser285, and Ser288.

Belongs to the immunoglobulin superfamily. Interacts with the ninth PDZ domain of MPDZ. Interacts with the first PDZ domain of PARD3. The association between PARD3 and PARD6B probably disrupts this interaction. Interacts with ITGAL (via I-domain). Interacts with CD151. In terms of processing, N-glycosylated.

Its subcellular location is the cell junction. It localises to the tight junction. The protein localises to the cell membrane. Its function is as follows. Seems to play a role in epithelial tight junction formation. Appears early in primordial forms of cell junctions and recruits PARD3. The association of the PARD6-PARD3 complex may prevent the interaction of PARD3 with JAM1, thereby preventing tight junction assembly. Plays a role in regulating monocyte transmigration involved in integrity of epithelial barrier. Ligand for integrin alpha-L/beta-2 involved in memory T-cell and neutrophil transmigration. This Rattus norvegicus (Rat) protein is Junctional adhesion molecule A (F11r).